We begin with the raw amino-acid sequence, 205 residues long: Enhancer of split mgamma protein (205 aa).

The bHLH domain maps to 15–72 (YRKVMKPMLERKRRARINKCLDELKDLMVATLESEGEHVTRLEKADILELTVTHLQKM). An Orange domain is found at 93–126 (FRSGYIHAVNEVSRSLSQLPGMNVSLGTQLMTHL). Residues 202–205 (WRPW) carry the WRPW motif motif.

Homodimer. Heterodimer with dpn. Might form higher-order oligomers. Transcription repression requires formation of a complex with a corepressor protein (Groucho). In terms of tissue distribution, expressed in sensory organ precursors in the wing, leg and eye imaginal disk.

It is found in the nucleus. In terms of biological role, transcriptional repressor of genes that require a bHLH protein for their transcription. May serve as a transcriptional regulator of the Achaete-scute complex (AS-C) genes. Contributes to the neural-epidermal lineage decision during early neurogenesis. Part of the Notch signaling pathway, plays a role in neuroblasts proliferation in embryos and larvae. In the larval brain, together with other self-renewal transcriptional repressors such as klu and dpn, required for type II neuroblast self-renewal and for maintaining erm in an inactive state in intermediate neural progenitors (INP) derived from type II neuroblasts. The chain is Enhancer of split mgamma protein from Drosophila melanogaster (Fruit fly).